Reading from the N-terminus, the 360-residue chain is DNA replication and repair protein RecF (360 aa).

Residue 33–40 (GENGSGKT) participates in ATP binding.

Belongs to the RecF family.

The protein localises to the cytoplasm. In terms of biological role, the RecF protein is involved in DNA metabolism; it is required for DNA replication and normal SOS inducibility. RecF binds preferentially to single-stranded, linear DNA. It also seems to bind ATP. In Rickettsia africae (strain ESF-5), this protein is DNA replication and repair protein RecF.